We begin with the raw amino-acid sequence, 258 residues long: Bidirectional sugar transporter SWEET9 (258 aa).

At 1–7 (MFLKVHE) the chain is on the extracellular side. A helical membrane pass occupies residues 8 to 28 (IAFLFGLLGNIVSFGVFLSPV). One can recognise a MtN3/slv 1 domain in the interval 10–96 (FLFGLLGNIV…FLYILYAPRE (87 aa)). Over 29-42 (PTFYGIYKKKSSKG) the chain is Cytoplasmic. A helical membrane pass occupies residues 43–63 (FQSIPYICALASATLLLYYGI). The Extracellular portion of the chain corresponds to 64 to 69 (MKTHAY). A helical membrane pass occupies residues 70–90 (LIISINTFGCFIEISYLFLYI). The Cytoplasmic portion of the chain corresponds to 91–103 (LYAPREAKISTLK). Residues 104–124 (LIVICNIGGLGLLILLVNLLV) traverse the membrane as a helical segment. Over 125–131 (PKQHRVS) the chain is Extracellular. A helical membrane pass occupies residues 132-152 (TVGWVCAAYSLAVFASPLSVM). Positions 132–216 (TVGWVCAAYS…ILYMMYQGST (85 aa)) constitute a MtN3/slv 2 domain. Residues 153-165 (RKVIKTKSVEYMP) are Cytoplasmic-facing. A helical membrane pass occupies residues 166–186 (FLLSLSLTLNAVMWFFYGLLI). Over 187–189 (KDK) the chain is Extracellular. The helical transmembrane segment at 190–210 (FIAMPNILGFLFGVAQMILYM) threads the bilayer. Over 211-258 (MYQGSTKTDLPTENQLANKTDVNEVPIVAVELPDVGSDNVEGSVRPMK) the chain is Cytoplasmic.

This sequence belongs to the SWEET sugar transporter family. As to quaternary structure, forms heterooligomers with SWEET1, SWEET5, SWEET8, SWEET11, SWEET13, SWEET16 and SWEET17. As to expression, specifically expressed in nectaries, mostly in the lower half of nectary parenchyma.

It localises to the cell membrane. The protein localises to the cytoplasmic vesicle membrane. It is found in the golgi apparatus. The protein resides in the trans-Golgi network membrane. Mediates both low-affinity uptake and efflux of sugar across the plasma membrane. Nectary-specific sugar transporter required for nectar production by mediating the secretion of sucrose from the nectary parenchyma to the extracellular space. The polypeptide is Bidirectional sugar transporter SWEET9 (Arabidopsis thaliana (Mouse-ear cress)).